The primary structure comprises 103 residues: Histone H4 (103 aa).

The span at 1–14 (MSGRGKGGKGLGKG) shows a compositional bias: gly residues. Residues 1–20 (MSGRGKGGKGLGKGGAKRHR) form a disordered region. A DNA-binding region spans residues 17 to 21 (KRHRK).

It belongs to the histone H4 family. The nucleosome is a histone octamer containing two molecules each of H2A, H2B, H3 and H4 assembled in one H3-H4 heterotetramer and two H2A-H2B heterodimers. The octamer wraps approximately 147 bp of DNA.

It is found in the nucleus. The protein localises to the chromosome. Its function is as follows. Core component of nucleosome. Nucleosomes wrap and compact DNA into chromatin, limiting DNA accessibility to the cellular machineries which require DNA as a template. Histones thereby play a central role in transcription regulation, DNA repair, DNA replication and chromosomal stability. DNA accessibility is regulated via a complex set of post-translational modifications of histones, also called histone code, and nucleosome remodeling. The protein is Histone H4 (H4-I) of Volvox carteri (Green alga).